The chain runs to 528 residues: Na(+)/H(+) antiporter NhaB (528 aa).

A run of 11 helical transmembrane segments spans residues 23–43, 45–65, 90–110, 136–156, 204–224, 237–257, 305–325, 350–370, 392–412, 450–470, and 479–499; these read VAII…NPFV, GWLL…CYPL, LVAN…IYFM, CFAA…AVVI, LLMH…VGEP, FGEF…CGLI, GIIA…VGLI, EEAL…AVII, LALF…VFVG, ATPN…APLI, and VMAL…IMFF.

This sequence belongs to the NhaB Na(+)/H(+) (TC 2.A.34) antiporter family.

The protein localises to the cell inner membrane. It catalyses the reaction 2 Na(+)(in) + 3 H(+)(out) = 2 Na(+)(out) + 3 H(+)(in). Functionally, na(+)/H(+) antiporter that extrudes sodium in exchange for external protons. Can also transport lithium and potassium. This is Na(+)/H(+) antiporter NhaB from Vibrio parahaemolyticus serotype O3:K6 (strain RIMD 2210633).